A 207-amino-acid chain; its full sequence is Outer-membrane lipoprotein LolB (207 aa).

Positions 1–21 (MTLPDFRLIRLLPLASLVLTA) are cleaved as a signal peptide. A lipid anchor (N-palmitoyl cysteine) is attached at C22. C22 is lipidated: S-diacylglycerol cysteine.

It belongs to the LolB family. Monomer.

Its subcellular location is the cell outer membrane. Its function is as follows. Plays a critical role in the incorporation of lipoproteins in the outer membrane after they are released by the LolA protein. This is Outer-membrane lipoprotein LolB from Salmonella typhi.